Consider the following 457-residue polypeptide: 11S globulin seed storage protein Ana o 2.0101 (457 aa).

The signal sequence occupies residues 1–14 (LSVCFLILFHGCLA). The igE-binding stretch occupies residues 15–29 (SRQEWQQQDECQIDR). Disulfide bonds link Cys25–Cys58 and Cys101–Cys278. Conformational epitope; mouse monoclonal antibody (mAb) 2B5-binding regions lie at residues 29–37 (RLDALEPDN) and 31–48 (DALE…TVEA). The 191-residue stretch at 30-220 (LDALEPDNRV…AFQVDERLIK (191 aa)) folds into the Cupin type-1 1 domain. Binds goat polyclonal antibodies (pAbs) regions lie at residues 32-45 (ALEP…EAGT) and 55-86 (QFRC…QLIY). Positions 34-57 (EPDNRVEYEAGTVEAWDPNHEQFR) are mouse monoclonal antibody (mAb) 2B5-binding. Positions 41–55 (YEAGTVEAWDPNHEQ) are mouse monoclonal antibody (mAb) 4H9-binding. Residues 105–119 (YQAPQQGRQQGQSGR) are igE-binding. Positions 215 to 239 (DERLIKQLKSEDNRGGIVKVKDDEL) are binds goat polyclonal antibodies (pAbs). A CD4(+) T cell-reactive epitope region spans residues 233–252 (KVKDDELRVIRPSRSQSERG). The segment at 243-270 (RPSRSQSERGSESEEESEDEKRRWGQRD) is disordered. A compositionally biased stretch (basic and acidic residues) spans 261–270 (DEKRRWGQRD). The interval 265–289 (RWGQRDNGIEETICTMRLKENINDP) is linear epitope; mouse monoclonal antibody (mAb) 1F5-binding. The NGXEET; peptidase recognition motif signature appears at 271–276 (NGIEET). The 150-residue stretch at 284 to 433 (ENINDPARAD…AFQISREDAR (150 aa)) folds into the Cupin type-1 2 domain. CD4(+) T cell-reactive epitope stretches follow at residues 289–308 (PARA…LNSL), 297–316 (PEVG…LKWL), 321–340 (EKGV…LNSH), 329–348 (ALVL…GCKG), and 377–396 (QNFA…ISFK). The tract at residues 395–416 (FKTNDRAMTSPLAGRTSVLGGM) is binds goat polyclonal antibodies (pAbs), but buried in the 3D-structure model.

It belongs to the 11S seed storage protein (globulins) family. As to quaternary structure, homotrimer. Hexamer. Each subunit is composed of an acidic and a basic chain derived from a single precursor and linked by a disulfide bond. Post-translationally, proteolytically processed from a single precursor to produce an acidic and a basic chain that are linked by a disulfide bond. Not glycosylated. Expressed in seed (at protein level). Expressed in the juice of the cashew apple (at protein level).

Its function is as follows. Seed storage protein. The chain is 11S globulin seed storage protein Ana o 2.0101 from Anacardium occidentale (Cashew).